A 194-amino-acid polypeptide reads, in one-letter code: Peptidyl-tRNA hydrolase (194 aa).

Position 17 (Tyr17) interacts with tRNA. Residue His22 is the Proton acceptor of the active site. The tRNA site is built by Tyr68, Asn70, and Asn116.

It belongs to the PTH family. In terms of assembly, monomer.

It is found in the cytoplasm. It catalyses the reaction an N-acyl-L-alpha-aminoacyl-tRNA + H2O = an N-acyl-L-amino acid + a tRNA + H(+). Hydrolyzes ribosome-free peptidyl-tRNAs (with 1 or more amino acids incorporated), which drop off the ribosome during protein synthesis, or as a result of ribosome stalling. Functionally, catalyzes the release of premature peptidyl moieties from peptidyl-tRNA molecules trapped in stalled 50S ribosomal subunits, and thus maintains levels of free tRNAs and 50S ribosomes. This Pseudomonas paraeruginosa (strain DSM 24068 / PA7) (Pseudomonas aeruginosa (strain PA7)) protein is Peptidyl-tRNA hydrolase.